A 2971-amino-acid polypeptide reads, in one-letter code: Reticulocyte-binding protein homolog 1 (2971 aa).

A signal peptide spans 1 to 20 (MQRWIFCNIVLHILIYLAEF). The Extracellular portion of the chain corresponds to 21-2897 (SHEQESYSSN…KKQKNGNHER (2877 aa)). Positions 30–50 (NEKIRKDYSDDNNYEPTPSYE) are disordered. Residues Asn70, Asn78, Asn87, Asn135, Asn286, Asn384, and Asn417 are each glycosylated (N-linked (GlcNAc...) asparagine). The tract at residues 500–833 (LQIVQQKLLE…MQQGYNNLTN (334 aa)) is erythrocyte binding domain (EBD). LRR repeat units follow at residues 528–553 (YKNI…NIKD) and 607–633 (LNNL…ILQK). Asn685 is a glycosylation site (N-linked (GlcNAc...) asparagine). LRR repeat units follow at residues 736–758 (IDTI…VYTD) and 785–808 (QETL…LLKE). Residues Asn830, Asn892, Asn1000, and Asn1010 are each glycosylated (N-linked (GlcNAc...) asparagine). LRR repeat units follow at residues 993–1018 (LKIL…TLND) and 1356–1381 (LRNI…AHKE). A glycan (N-linked (GlcNAc...) asparagine) is linked at Asn1425. Residues 1466–1489 (AKYMENIDTYKNNIEIISKQINPE) form an LRR 7 repeat. Residue Asn1496 is glycosylated (N-linked (GlcNAc...) asparagine). LRR repeat units follow at residues 1512 to 1537 (YKQI…ELQN), 1586 to 1609 (SQNI…LEEE), and 1611 to 1636 (EQMK…AFIN). Asn1664, Asn1692, Asn1718, Asn1816, and Asn1844 each carry an N-linked (GlcNAc...) asparagine glycan. LRR repeat units lie at residues 1700-1723 (LQEL…TIKY) and 1809-1834 (LKLF…SIQN). Residues 1880-1903 (QNEIRNMNLEKNFMLDKSKKIDEE) form an LRR 13 repeat. Residues Asn1913 and Asn1918 are each glycosylated (N-linked (GlcNAc...) asparagine). Residues 1944–1967 (KENIEKIKQEINTLSDVFKKPFFF) form an LRR 14 repeat. 6 N-linked (GlcNAc...) asparagine glycosylation sites follow: Asn2054, Asn2207, Asn2289, Asn2300, Asn2338, and Asn2405. An LRR 15 repeat occupies 2523 to 2548 (IKDIDNVFIKIQNNKFEQIQKYIEII). Residues Asn2598 and Asn2752 are each glycosylated (N-linked (GlcNAc...) asparagine). Residues 2731-2754 (ENIFDNIQLKKKDIDDIIININNT) form an LRR 16 repeat. Composition is skewed to basic and acidic residues over residues 2773–2782 (KVDEKSEINN) and 2795–2804 (QKNKIKDHNL). 2 disordered regions span residues 2773-2825 (KVDE…MKEQ) and 2840-2862 (HHVH…LQEQ). A glycan (N-linked (GlcNAc...) asparagine) is linked at Asn2811. A compositionally biased stretch (basic and acidic residues) spans 2814–2825 (EESHQNEQMKEQ). A helical transmembrane segment spans residues 2898 to 2918 (MYFASGIVVSILFLSSLGFVI). The Cytoplasmic portion of the chain corresponds to 2919-2971 (NSKNNKQEYDKEQEKQQQNDFVCDNNKMDDKSTQKYGRNQEEVMEISFDNDYI).

As to quaternary structure, may in part interact with AMA1 in the moving tight junction between the parasite and the erythrocyte membranes; the interaction may facilitate junction formation and active invasion. Proteolytically processed into multiple fragments following schizont rupture. In the mature schizont stage prior to merozoite release, full length RH1 is processed post-Golgi into a 240 kDa N-terminal form and a 120 kDa C-terminal form containing the transmembrane region. Both forms appear not to form a complex. However, they appear to remain in close proximity in late schizonts. Following merozoite invasion of host erythrocytes, the 240 kDa form is further processed into a 140 kDa form which may be involved in the disengagement of the ligand-receptor complex required during the invasion process. Also, the 120 kDa is further cleaved into a 110 kDa form and a transmembrane 9 kDa form probably by ROM4.

The protein localises to the cell membrane. It is found in the secreted. The protein resides in the cell junction. Its subcellular location is the tight junction. It localises to the cytoplasmic vesicle. The protein localises to the secretory vesicle. It is found in the rhoptry. In terms of biological role, during the asexual blood stage, binds to a sialic acid containing receptor on the surface of the host erythrocyte and thus is involved in merozoite invasion. Binds erythrocytes via a neuraminidase sensitive and trypsin-, chymotrypsin-resistant receptor. After merozoite attachment and reorientation, RH1 binding to its erythrocyte receptor triggers an increase in intracellular Ca(2+) within the parasite resulting in the release of microneme proteins such as EBA175 which in turn leads to the formation of the tight junction between parasite and host cell. In Plasmodium falciparum (isolate 3D7), this protein is Reticulocyte-binding protein homolog 1.